A 391-amino-acid polypeptide reads, in one-letter code: S-adenosylmethionine synthase (391 aa).

H14 lines the ATP pocket. A Mg(2+)-binding site is contributed by D16. Residue E42 coordinates K(+). E55 and Q98 together coordinate L-methionine. The segment at 98–108 is flexible loop; sequence QSADIAMGVDE. ATP contacts are provided by residues 172–174, 238–239, D247, 253–254, A270, and K274; these read DGK, RF, and RK. Residue D247 coordinates L-methionine. K278 contributes to the L-methionine binding site.

It belongs to the AdoMet synthase family. Homotetramer; dimer of dimers. Mg(2+) is required as a cofactor. It depends on K(+) as a cofactor.

Its subcellular location is the cytoplasm. The enzyme catalyses L-methionine + ATP + H2O = S-adenosyl-L-methionine + phosphate + diphosphate. Its pathway is amino-acid biosynthesis; S-adenosyl-L-methionine biosynthesis; S-adenosyl-L-methionine from L-methionine: step 1/1. Catalyzes the formation of S-adenosylmethionine (AdoMet) from methionine and ATP. The overall synthetic reaction is composed of two sequential steps, AdoMet formation and the subsequent tripolyphosphate hydrolysis which occurs prior to release of AdoMet from the enzyme. The sequence is that of S-adenosylmethionine synthase from Clostridium acetobutylicum (strain ATCC 824 / DSM 792 / JCM 1419 / IAM 19013 / LMG 5710 / NBRC 13948 / NRRL B-527 / VKM B-1787 / 2291 / W).